The sequence spans 425 residues: Histone-binding protein RBBP7 (425 aa).

7 WD repeats span residues 47 to 122 (QWLP…KINH), 128 to 173 (RARY…LRLR), 181 to 217 (GLSWNSNLSGHLLSASDDHTVCLWDISAGPKEGKVVD), 228 to 269 (VVED…HSVD), 275 to 312 (VNCLSFNPYSEFILATGSADKTVALWDLRNLKLKLHSF), 318 to 369 (EIFQ…LFIH), and 376 to 403 (ISDFSWNPNEPWVICSVSEDNIMQIWQM).

It belongs to the WD repeat RBAP46/RBAP48/MSI1 family. As to quaternary structure, binds directly to helix 1 of the histone fold of histone H4, a region that is not accessible when H4 is in chromatin.

The protein localises to the nucleus. Its function is as follows. Core histone-binding subunit that may target chromatin remodeling factors, histone acetyltransferases and histone deacetylases to their histone substrates in a manner that is regulated by nucleosomal DNA. Component of several complexes which regulate chromatin metabolism. The polypeptide is Histone-binding protein RBBP7 (rbbp7) (Xenopus laevis (African clawed frog)).